Reading from the N-terminus, the 355-residue chain is 3-isopropylmalate dehydrogenase (355 aa).

The substrate site is built by arginine 90, arginine 100, arginine 128, and aspartate 222. Positions 222, 246, and 250 each coordinate Mg(2+). NAD(+) is bound at residue 280 to 292 (GSAPDIAGKGVAN).

Belongs to the isocitrate and isopropylmalate dehydrogenases family. LeuB type 1 subfamily. Homodimer. Mg(2+) serves as cofactor. It depends on Mn(2+) as a cofactor.

The protein localises to the cytoplasm. The catalysed reaction is (2R,3S)-3-isopropylmalate + NAD(+) = 4-methyl-2-oxopentanoate + CO2 + NADH. It participates in amino-acid biosynthesis; L-leucine biosynthesis; L-leucine from 3-methyl-2-oxobutanoate: step 3/4. In terms of biological role, catalyzes the oxidation of 3-carboxy-2-hydroxy-4-methylpentanoate (3-isopropylmalate) to 3-carboxy-4-methyl-2-oxopentanoate. The product decarboxylates to 4-methyl-2 oxopentanoate. This chain is 3-isopropylmalate dehydrogenase, found in Cupriavidus pinatubonensis (strain JMP 134 / LMG 1197) (Cupriavidus necator (strain JMP 134)).